Consider the following 398-residue polypeptide: Succinate--CoA ligase [ADP-forming] subunit beta (398 aa).

The ATP-grasp domain occupies 9–254 (KALLKSYGAP…TTEEDEKEIE (246 aa)). Residues Lys46, 53 to 55 (GRG), Glu109, Ala112, and Glu117 each bind ATP. Mg(2+) contacts are provided by Asn209 and Asp223. Residues Asn274 and 331-333 (GIM) contribute to the substrate site.

It belongs to the succinate/malate CoA ligase beta subunit family. As to quaternary structure, heterotetramer of two alpha and two beta subunits. Requires Mg(2+) as cofactor.

It carries out the reaction succinate + ATP + CoA = succinyl-CoA + ADP + phosphate. The catalysed reaction is GTP + succinate + CoA = succinyl-CoA + GDP + phosphate. It participates in carbohydrate metabolism; tricarboxylic acid cycle; succinate from succinyl-CoA (ligase route): step 1/1. Functionally, succinyl-CoA synthetase functions in the citric acid cycle (TCA), coupling the hydrolysis of succinyl-CoA to the synthesis of either ATP or GTP and thus represents the only step of substrate-level phosphorylation in the TCA. The beta subunit provides nucleotide specificity of the enzyme and binds the substrate succinate, while the binding sites for coenzyme A and phosphate are found in the alpha subunit. The polypeptide is Succinate--CoA ligase [ADP-forming] subunit beta (Sinorhizobium medicae (strain WSM419) (Ensifer medicae)).